The sequence spans 62 residues: Photosystem II reaction center protein Z (62 aa).

A run of 2 helical transmembrane segments spans residues Ser-8–Ala-28 and Phe-41–Ile-61.

Belongs to the PsbZ family. As to quaternary structure, PSII is composed of 1 copy each of membrane proteins PsbA, PsbB, PsbC, PsbD, PsbE, PsbF, PsbH, PsbI, PsbJ, PsbK, PsbL, PsbM, PsbT, PsbY, PsbZ, Psb30/Ycf12, at least 3 peripheral proteins of the oxygen-evolving complex and a large number of cofactors. It forms dimeric complexes.

It is found in the plastid. The protein resides in the chloroplast thylakoid membrane. Functionally, may control the interaction of photosystem II (PSII) cores with the light-harvesting antenna, regulates electron flow through the 2 photosystem reaction centers. PSII is a light-driven water plastoquinone oxidoreductase, using light energy to abstract electrons from H(2)O, generating a proton gradient subsequently used for ATP formation. In Cryptomeria japonica (Japanese cedar), this protein is Photosystem II reaction center protein Z.